The sequence spans 362 residues: uncharacterized protein (362 aa).

Disordered stretches follow at residues 1 to 117 (MASK…GLNR), 153 to 172 (SSAPGTSASTSGSPSVGIRK), and 210 to 266 (RHFD…SSSN). Over residues 12–23 (AKKEKEIKKEIE) the composition is skewed to basic and acidic residues. Over residues 51–70 (ENDDTDGDGKEEDAQKEDDI) the composition is skewed to acidic residues. Composition is skewed to low complexity over residues 100–112 (NSPPSESSSTRNT), 153–167 (SSAPGTSASTSGSPS), and 241–265 (VPPSAVSPAPGSGSSASSGTSTSSS).

This is an uncharacterized protein from Caenorhabditis elegans.